The primary structure comprises 48 residues: Small, acid-soluble spore protein P (48 aa).

Over residues 1-12 the composition is skewed to basic and acidic residues; sequence MTNKNDGKDMRK. A disordered region spans residues 1–48; the sequence is MTNKNDGKDMRKNAPKGDNPGQPEPLDGSKKVKNRNHTRQKHNTSHDM. The segment covering 31–48 has biased composition (basic residues); the sequence is KVKNRNHTRQKHNTSHDM.

The protein belongs to the SspP family.

The protein resides in the spore core. This is Small, acid-soluble spore protein P from Geobacillus kaustophilus (strain HTA426).